The following is a 489-amino-acid chain: Type II restriction enzyme Sau3AI (489 aa).

Mg(2+) is required as a cofactor.

It carries out the reaction Endonucleolytic cleavage of DNA to give specific double-stranded fragments with terminal 5'-phosphates.. An E and P subtype restriction enzyme that recognizes the double-stranded sequence 5'-GATC-3' and cleaves before G-1. The protein is Type II restriction enzyme Sau3AI (sau3AIR) of Staphylococcus aureus.